A 268-amino-acid polypeptide reads, in one-letter code: MAGNLLNGLRAAIAFLTTLPVRIVDGDYDAFADRQYLFIPVAIVTGLLLGVAGTLFQCILPAPFAAVLTVACIFLLTGINHLDGLSDFGDGLIASGPREKKVRAMKDVHAGAGGLLFMAMDLLFLFALAMTFAGSPTWLFVPLLVAEGCAKVAQITIIAFGKSAHEGMGSYMIARMKKEHYLAAVIGAWIAIGIAIIGAAIIPGGGNPLRVIMAGGLAMLSPLAVALIILIISDRNFGGVNGDVIGAANEIARIAALGVMGAVLWMRF.

8 helical membrane-spanning segments follow: residues M1–V21, Y36–F56, I59–I79, A112–F132, W138–I158, L182–I202, I212–I232, and V244–L264.

It belongs to the CobS family. Requires Mg(2+) as cofactor.

The protein localises to the cell membrane. It catalyses the reaction alpha-ribazole + adenosylcob(III)inamide-GDP = adenosylcob(III)alamin + GMP + H(+). It carries out the reaction alpha-ribazole 5'-phosphate + adenosylcob(III)inamide-GDP = adenosylcob(III)alamin 5'-phosphate + GMP + H(+). The protein operates within cofactor biosynthesis; adenosylcobalamin biosynthesis; adenosylcobalamin from cob(II)yrinate a,c-diamide: step 7/7. Its function is as follows. Joins adenosylcobinamide-GDP and alpha-ribazole to generate adenosylcobalamin (Ado-cobalamin). Also synthesizes adenosylcobalamin 5'-phosphate from adenosylcobinamide-GDP and alpha-ribazole 5'-phosphate. In Methanocella arvoryzae (strain DSM 22066 / NBRC 105507 / MRE50), this protein is Adenosylcobinamide-GDP ribazoletransferase.